A 162-amino-acid chain; its full sequence is Photosystem II extrinsic protein V (162 aa).

The first 26 residues, 1–26 (MFNKNFWTSIIIGCLFCTITYSGVNA), serve as a signal peptide directing secretion. Heme c is bound by residues Cys-62, Cys-65, His-66, and His-117.

This sequence belongs to the cytochrome c family. PsbV subfamily. PSII is composed of 1 copy each of membrane proteins PsbA, PsbB, PsbC, PsbD, PsbE, PsbF, PsbH, PsbI, PsbJ, PsbK, PsbL, PsbM, PsbT, PsbX, PsbY, PsbZ, Psb30/Ycf12, at least 3 peripheral proteins of the oxygen-evolving complex and a large number of cofactors. It forms dimeric complexes. It depends on heme c as a cofactor.

It is found in the plastid. The protein resides in the cyanelle thylakoid membrane. Its function is as follows. One of the extrinsic, lumenal subunits of photosystem II (PSII). PSII is a light-driven water plastoquinone oxidoreductase, using light energy to abstract electrons from H(2)O, generating a proton gradient subsequently used for ATP formation. The extrinsic proteins stabilize the structure of photosystem II oxygen-evolving complex (OEC), the ion environment of oxygen evolution and protect the OEC against heat-induced inactivation. The sequence is that of Photosystem II extrinsic protein V from Cyanophora paradoxa.